A 338-amino-acid chain; its full sequence is MSPVATESMYKPTTINQTAHQQAMDPLKSKQQSNATVNKPAFKPEPAVNLTPIKFAPIKEHQVQRAMVRRYFQDMEERAISDVIIVGAGSAGLSCAYALGTARPDLKITILESNVAPGGGCWLGGQLMSAMVCRKPADEFLDQVGVPYEDEGNFVVVKHAALFTSTVLSKVLAMPNVKMFNATACEDLIIKPCPINPGVQRIAGCVTNWTLVSLNHDHQSCMDPSTITAPLVCSFAGHDGPFGAFCVKRVASAGLSEGLGDMRPLDMERAEDHIANKTREILPGLIVGGMELSEFDGSARMGPTFGAMLLSGKRAAEVALQSLDRVKIEEGEVVGLAK.

Residues 1 to 43 (MSPVATESMYKPTTINQTAHQQAMDPLKSKQQSNATVNKPAFK) are disordered. Residues 11 to 21 (KPTTINQTAHQ) show a composition bias toward polar residues. Substrate contacts are provided by residues alanine 91, 112 to 113 (ES), glycine 120, and cysteine 185. Residue cysteine 221 is modified to 2,3-didehydroalanine (Cys). Substrate-binding positions include aspartate 223, histidine 238, methionine 290, and 300 to 302 (RMG).

The protein belongs to the THI4 family. In terms of assembly, homooctamer. Requires Fe cation as cofactor. During the catalytic reaction, a sulfide is transferred from Cys-221 to a reaction intermediate, generating a dehydroalanine residue. As to expression, highly expressed in haustoria, and only in low amounts in intercellular hyphae. Found in the basal hyphae of the uredia, but not in the pedicels and only at very low levels in uredospores.

It is found in the cytoplasm. It localises to the nucleus. The enzyme catalyses [ADP-thiazole synthase]-L-cysteine + glycine + NAD(+) = [ADP-thiazole synthase]-dehydroalanine + ADP-5-ethyl-4-methylthiazole-2-carboxylate + nicotinamide + 3 H2O + 2 H(+). Its function is as follows. Involved in biosynthesis of the thiamine precursor thiazole. Catalyzes the conversion of NAD and glycine to adenosine diphosphate 5-(2-hydroxyethyl)-4-methylthiazole-2-carboxylic acid (ADT), an adenylated thiazole intermediate. The reaction includes an iron-dependent sulfide transfer from a conserved cysteine residue of the protein to a thiazole intermediate. The enzyme can only undergo a single turnover, which suggests it is a suicide enzyme. May have additional roles in adaptation to various stress conditions and in DNA damage tolerance. The polypeptide is Thiamine thiazole synthase (THI2) (Uromyces fabae (Rust fungus)).